A 78-amino-acid chain; its full sequence is Conotoxin TsMEKL-P012 (78 aa).

The signal sequence occupies residues 1-19; sequence MEKLTILLLLAAVLVLAQA. A propeptide spanning residues 20–38 is cleaved from the precursor; it reads LIKKGGGEKRQKEKINFLS. 3 disulfide bridges follow: Cys-52/Cys-66, Cys-59/Cys-70, and Cys-65/Cys-75.

This sequence belongs to the conotoxin O2 superfamily. As to expression, expressed by the venom duct.

The protein localises to the secreted. This chain is Conotoxin TsMEKL-P012, found in Conus tessulatus (Tessellate cone).